Consider the following 355-residue polypeptide: UDP-N-acetylglucosamine--N-acetylmuramyl-(pentapeptide) pyrophosphoryl-undecaprenol N-acetylglucosamine transferase (355 aa).

Residues 14 to 16, Asn-126, Arg-162, Ser-190, Ile-245, 264 to 269, and Gln-289 contribute to the UDP-N-acetyl-alpha-D-glucosamine site; these read TGG and ALTVCE.

Belongs to the glycosyltransferase 28 family. MurG subfamily.

The protein resides in the cell inner membrane. The enzyme catalyses di-trans,octa-cis-undecaprenyl diphospho-N-acetyl-alpha-D-muramoyl-L-alanyl-D-glutamyl-meso-2,6-diaminopimeloyl-D-alanyl-D-alanine + UDP-N-acetyl-alpha-D-glucosamine = di-trans,octa-cis-undecaprenyl diphospho-[N-acetyl-alpha-D-glucosaminyl-(1-&gt;4)]-N-acetyl-alpha-D-muramoyl-L-alanyl-D-glutamyl-meso-2,6-diaminopimeloyl-D-alanyl-D-alanine + UDP + H(+). Its pathway is cell wall biogenesis; peptidoglycan biosynthesis. Functionally, cell wall formation. Catalyzes the transfer of a GlcNAc subunit on undecaprenyl-pyrophosphoryl-MurNAc-pentapeptide (lipid intermediate I) to form undecaprenyl-pyrophosphoryl-MurNAc-(pentapeptide)GlcNAc (lipid intermediate II). The polypeptide is UDP-N-acetylglucosamine--N-acetylmuramyl-(pentapeptide) pyrophosphoryl-undecaprenol N-acetylglucosamine transferase (Mannheimia succiniciproducens (strain KCTC 0769BP / MBEL55E)).